The sequence spans 186 residues: dCTP deaminase, dUMP-forming (186 aa).

DCTP is bound by residues 99-104, Asp117, 125-127, Gln146, Tyr159, Lys166, and Gln170; these read KSSIAR and TLE. Glu127 (proton donor/acceptor) is an active-site residue.

This sequence belongs to the dCTP deaminase family. In terms of assembly, homotrimer.

It carries out the reaction dCTP + 2 H2O = dUMP + NH4(+) + diphosphate. It participates in pyrimidine metabolism; dUMP biosynthesis; dUMP from dCTP: step 1/1. In terms of biological role, bifunctional enzyme that catalyzes both the deamination of dCTP to dUTP and the hydrolysis of dUTP to dUMP without releasing the toxic dUTP intermediate. This is dCTP deaminase, dUMP-forming from Methanosphaerula palustris (strain ATCC BAA-1556 / DSM 19958 / E1-9c).